The chain runs to 197 residues: Nucleoside triphosphate pyrophosphatase (197 aa).

The active-site Proton acceptor is Asp71.

The protein belongs to the Maf family. A divalent metal cation serves as cofactor.

Its subcellular location is the cytoplasm. The catalysed reaction is a ribonucleoside 5'-triphosphate + H2O = a ribonucleoside 5'-phosphate + diphosphate + H(+). The enzyme catalyses a 2'-deoxyribonucleoside 5'-triphosphate + H2O = a 2'-deoxyribonucleoside 5'-phosphate + diphosphate + H(+). Functionally, nucleoside triphosphate pyrophosphatase. May have a dual role in cell division arrest and in preventing the incorporation of modified nucleotides into cellular nucleic acids. The chain is Nucleoside triphosphate pyrophosphatase from Synechococcus sp. (strain JA-2-3B'a(2-13)) (Cyanobacteria bacterium Yellowstone B-Prime).